The following is a 263-amino-acid chain: Palmitoyltransferase ZDHHC22 (263 aa).

The Cytoplasmic portion of the chain corresponds to 1–9 (MLALRLLNV). Residues 10 to 30 (VAPAYFLCISLVTFVLQLFLF) form a helical membrane-spanning segment. Over 31 to 48 (LPSMREDPAAARLFSPAL) the chain is Lumenal. A helical transmembrane segment spans residues 49-69 (LHGALFLFLSANALGNYVLVI). Topologically, residues 70–125 (QNSPDDLGACQGASARKTPCPSPSTHFCRVCARVTLRHDHHCFFTGNCIGSRNMRN) are cytoplasmic. One can recognise a DHHC domain in the interval 92–131 (PSTHFCRVCARVTLRHDHHCFFTGNCIGSRNMRNFVLFCL). The active-site S-palmitoyl cysteine intermediate is the Cys-111. The next 2 membrane-spanning stretches (helical) occupy residues 126-146 (FVLF…AGVA) and 147-167 (YISA…TLLP). Residues 168–182 (TSISQFFSGAVLGSE) are Cytoplasmic-facing. A helical transmembrane segment spans residues 183–203 (MFVILMLYLWFAIGLACAGFC). At 204 to 263 (CHQLLLILRGQTRHQVRKGVAVRARPWRKNLQEVFGKRWLLGLLVPMFNVGSESSKQQDK) the chain is on the lumenal side.

The protein belongs to the DHHC palmitoyltransferase family. As to quaternary structure, interacts with CNN3. Widely expressed.

It localises to the endoplasmic reticulum membrane. The protein localises to the golgi apparatus membrane. It catalyses the reaction L-cysteinyl-[protein] + hexadecanoyl-CoA = S-hexadecanoyl-L-cysteinyl-[protein] + CoA. Its function is as follows. Palmitoyltransferase that could catalyze the addition of palmitate onto various protein substrates and be involved in a variety of cellular processes. Catalyzes the palmitoylation of KCNMA1, regulating localization of KCNMA1 to the plasma membrane. Might also mediate palmitoylation of CNN3. This is Palmitoyltransferase ZDHHC22 from Homo sapiens (Human).